The following is a 205-amino-acid chain: Anaerobic dimethyl sulfoxide reductase chain B (205 aa).

4Fe-4S ferredoxin-type domains are found at residues Y5–E33, F59–D89, and G90–T119. [4Fe-4S] cluster is bound by residues C14, C17, C20, C24, C67, C70, C75, C79, C99, C102, C105, C109, C126, C129, C141, and C145. A disordered region spans residues K184–V205. Residues N186–T195 are compositionally biased toward polar residues.

As to quaternary structure, heterotrimeric enzyme composed of a catalytic heterodimer (DmsAB) and a membrane anchor protein (DmsC). [4Fe-4S] cluster is required as a cofactor.

Its function is as follows. Electron transfer subunit of the terminal reductase during anaerobic growth on various sulfoxide and N-oxide compounds. This chain is Anaerobic dimethyl sulfoxide reductase chain B (dmsB), found in Escherichia coli (strain K12).